The sequence spans 1013 residues: Tolloid-like protein 1 (1013 aa).

The signal sequence occupies residues 1 to 30; the sequence is MGLQALSPRMLLWLVVSGIVFSRVLWVCAG. The propeptide occupies 31–147; the sequence is LDYDYTFDGN…EQSEKNRVPR (117 aa). Residues 124-150 form a disordered region; the sequence is QNNTMKGKAPPKLSEQSEKNRVPRAAT. Residues 148–347 form the Peptidase M12A domain; it reads AATSRTERIW…AQARKLYRCP (200 aa). A glycan (N-linked (GlcNAc...) asparagine) is linked at Asn169. 4 cysteine pairs are disulfide-bonded: Cys190–Cys346, Cys210–Cys232, Cys212–Cys213, and Cys349–Cys375. His240 contacts Zn(2+). Residue Glu241 is part of the active site. Zn(2+)-binding residues include His244 and His250. CUB domains are found at residues 349 to 461 and 462 to 574; these read CGET…YEAI and CGGE…FFKE. N-linked (GlcNAc...) asparagine glycosylation is found at Asn359 and Asn390. Disulfide bonds link Cys402-Cys424, Cys462-Cys488, Cys515-Cys537, Cys578-Cys590, Cys586-Cys599, Cys601-Cys614, Cys618-Cys644, Cys671-Cys693, Cys734-Cys745, Cys741-Cys754, Cys756-Cys769, Cys774-Cys800, Cys827-Cys849, Cys887-Cys917, and Cys944-Cys966. In terms of domain architecture, EGF-like 1; calcium-binding spans 574–615; that stretch reads EEDECAKPDRGGCEQRCLNTLGSYQCACEPGYELGPDRRSCE. The region spanning 618–730 is the CUB 3 domain; it reads CGGLLTKLNG…KGFKAHFFSD (113 aa). Asn626 is a glycosylation site (N-linked (GlcNAc...) asparagine). The 41-residue stretch at 730–770 folds into the EGF-like 2; calcium-binding domain; the sequence is DKDECSKDNGGCQHECVNTMGSYTCQCRNGFVLHENKHDCK. 2 CUB domains span residues 774-886 and 887-1003; these read CEQK…HSTE and CGGR…YKSI.

It depends on Zn(2+) as a cofactor. In terms of tissue distribution, highly expressed in brain and kidney and weakly in lung, skeletal muscle. A perceptible level of expression is observed in heart and testis.

It is found in the secreted. Protease which processes procollagen C-propeptides, such as chordin, pro-biglycan and pro-lysyl oxidase. Required for the embryonic development, especially heart development. Predominant protease, which in the development, influences dorsal-ventral patterning and skeletogenesis. The chain is Tolloid-like protein 1 (Tll1) from Mus musculus (Mouse).